The sequence spans 393 residues: Synaptic vesicle membrane protein VAT-1 homolog (393 aa).

Positions 1–40 (MSDEREVAEAATGEDASSPPPKTEAASDPQHPAASEGAAA) are disordered. S2 carries the post-translational modification N-acetylserine. S2, S18, S27, S35, and S44 each carry phosphoserine.

The protein belongs to the zinc-containing alcohol dehydrogenase family. Quinone oxidoreductase subfamily. As to expression, expressed in brain. Also expressed in glioblastoma cells.

Its subcellular location is the cytoplasm. The protein localises to the mitochondrion outer membrane. Possesses ATPase activity. Plays a part in calcium-regulated keratinocyte activation in epidermal repair mechanisms. Has no effect on cell proliferation. Negatively regulates mitochondrial fusion in cooperation with mitofusin proteins (MFN1-2). The chain is Synaptic vesicle membrane protein VAT-1 homolog (VAT1) from Homo sapiens (Human).